The sequence spans 465 residues: Protein CitXG (465 aa).

An apo-citrate lyase phosphoribosyl-dephospho-CoA transferase region spans residues Met1–Ala182. A 2-(5''-triphosphoribosyl)-3'-dephosphocoenzyme-A synthase region spans residues Glu183–Asn465.

The protein in the N-terminal section; belongs to the CitX family. It in the C-terminal section; belongs to the CitG/MdcB family.

It carries out the reaction apo-[citrate lyase ACP] + 2'-(5''-triphospho-alpha-D-ribosyl)-3'-dephospho-CoA = holo-[citrate lyase ACP] + diphosphate. It catalyses the reaction 3'-dephospho-CoA + ATP = 2'-(5''-triphospho-alpha-D-ribosyl)-3'-dephospho-CoA + adenine. Bifunctional enzyme that catalyzes formation of 2-(5''-triphosphoribosyl)-3'-dephosphocoenzyme-A, and then the transfer of this prosthetic group precursor to the apo-acyl carrier protein (gamma chain) of the citrate lyase to yield the holo-acyl carrier protein. The sequence is that of Protein CitXG (citXG) from Haemophilus influenzae (strain ATCC 51907 / DSM 11121 / KW20 / Rd).